The sequence spans 411 residues: D-ribitol-5-phosphate cytidylyltransferase (411 aa).

This sequence belongs to the IspD/TarI cytidylyltransferase family. IspD subfamily. Homodimer.

Its subcellular location is the cytoplasm. It localises to the cytosol. The catalysed reaction is D-ribitol 5-phosphate + CTP + H(+) = CDP-L-ribitol + diphosphate. The enzyme catalyses D-ribose 5-phosphate + CTP + H(+) = CDP-D-ribose + diphosphate. It carries out the reaction D-ribulose 5-phosphate + CTP + H(+) = CDP-D-ribulose + diphosphate. The protein operates within protein modification; protein glycosylation. Its function is as follows. Cytidylyltransferase required for protein O-linked mannosylation. Catalyzes the formation of CDP-ribitol nucleotide sugar from D-ribitol 5-phosphate. CDP-ribitol is a substrate of FKTN during the biosynthesis of the phosphorylated O-mannosyl trisaccharide (N-acetylgalactosamine-beta-3-N-acetylglucosamine-beta-4-(phosphate-6-)mannose), a carbohydrate structure present in alpha-dystroglycan (DAG1), which is required for binding laminin G-like domain-containing extracellular proteins with high affinity. Shows activity toward other pentose phosphate sugars and mediates formation of CDP-ribulose or CDP-ribose using CTP and ribulose-5-phosphate or ribose-5-phosphate, respectively. Not involved in dolichol production. The polypeptide is D-ribitol-5-phosphate cytidylyltransferase (crppa) (Xenopus tropicalis (Western clawed frog)).